A 489-amino-acid polypeptide reads, in one-letter code: Probable cytosol aminopeptidase (489 aa).

K254 and D259 together coordinate Mn(2+). K266 is a catalytic residue. Mn(2+) contacts are provided by D277, D336, and E338. The active site involves R340.

Belongs to the peptidase M17 family. The cofactor is Mn(2+).

It localises to the cytoplasm. It catalyses the reaction Release of an N-terminal amino acid, Xaa-|-Yaa-, in which Xaa is preferably Leu, but may be other amino acids including Pro although not Arg or Lys, and Yaa may be Pro. Amino acid amides and methyl esters are also readily hydrolyzed, but rates on arylamides are exceedingly low.. The catalysed reaction is Release of an N-terminal amino acid, preferentially leucine, but not glutamic or aspartic acids.. Its function is as follows. Presumably involved in the processing and regular turnover of intracellular proteins. Catalyzes the removal of unsubstituted N-terminal amino acids from various peptides. This Cereibacter sphaeroides (strain ATCC 17025 / ATH 2.4.3) (Rhodobacter sphaeroides) protein is Probable cytosol aminopeptidase.